We begin with the raw amino-acid sequence, 91 residues long: Small ribosomal subunit protein bS20 (91 aa).

This sequence belongs to the bacterial ribosomal protein bS20 family.

In terms of biological role, binds directly to 16S ribosomal RNA. This Caulobacter vibrioides (strain ATCC 19089 / CIP 103742 / CB 15) (Caulobacter crescentus) protein is Small ribosomal subunit protein bS20.